Here is a 324-residue protein sequence, read N- to C-terminus: Anthranilate phosphoribosyltransferase (324 aa).

Residues Gly-72, 75–76 (GD), Ser-80, 82–85 (NVST), 99–107 (KHGNVSITS), and Ser-111 each bind 5-phospho-alpha-D-ribose 1-diphosphate. Gly-72 is an anthranilate binding site. Ser-84 provides a ligand contact to Mg(2+). Asn-102 contributes to the anthranilate binding site. Arg-157 is an anthranilate binding site. Positions 215 and 216 each coordinate Mg(2+).

Belongs to the anthranilate phosphoribosyltransferase family. As to quaternary structure, homodimer. It depends on Mg(2+) as a cofactor.

It catalyses the reaction N-(5-phospho-beta-D-ribosyl)anthranilate + diphosphate = 5-phospho-alpha-D-ribose 1-diphosphate + anthranilate. Its pathway is amino-acid biosynthesis; L-tryptophan biosynthesis; L-tryptophan from chorismate: step 2/5. Functionally, catalyzes the transfer of the phosphoribosyl group of 5-phosphorylribose-1-pyrophosphate (PRPP) to anthranilate to yield N-(5'-phosphoribosyl)-anthranilate (PRA). This chain is Anthranilate phosphoribosyltransferase, found in Pyrococcus abyssi (strain GE5 / Orsay).